Consider the following 749-residue polypeptide: Catalase-peroxidase 2 (749 aa).

A signal peptide spans 1-27 (MFKRTIPLFAAFTLAISPSIFPNYAHA). Positions 107 to 229 (WHAAGTYRIY…LAATVMGLIY (123 aa)) form a cross-link, tryptophyl-tyrosyl-methioninium (Trp-Tyr) (with M-255). H108 functions as the Proton acceptor in the catalytic mechanism. The tryptophyl-tyrosyl-methioninium (Tyr-Met) (with W-107) cross-link spans 229-255 (YVNPEGPNGVPDPLAAAEKIRETFGRM). H270 serves as a coordination point for heme b.

This sequence belongs to the peroxidase family. Peroxidase/catalase subfamily. As to quaternary structure, homodimer or homotetramer. Heme b serves as cofactor. Post-translationally, formation of the three residue Trp-Tyr-Met cross-link is important for the catalase, but not the peroxidase activity of the enzyme.

It catalyses the reaction H2O2 + AH2 = A + 2 H2O. The enzyme catalyses 2 H2O2 = O2 + 2 H2O. Its function is as follows. Bifunctional enzyme with both catalase and broad-spectrum peroxidase activity. The chain is Catalase-peroxidase 2 from Legionella pneumophila subsp. pneumophila (strain Philadelphia 1 / ATCC 33152 / DSM 7513).